Consider the following 126-residue polypeptide: Holo-[acyl-carrier-protein] synthase (126 aa).

Mg(2+)-binding residues include Asp-9 and Glu-58.

This sequence belongs to the P-Pant transferase superfamily. AcpS family. Requires Mg(2+) as cofactor.

It localises to the cytoplasm. The catalysed reaction is apo-[ACP] + CoA = holo-[ACP] + adenosine 3',5'-bisphosphate + H(+). Transfers the 4'-phosphopantetheine moiety from coenzyme A to a Ser of acyl-carrier-protein. In Shewanella frigidimarina (strain NCIMB 400), this protein is Holo-[acyl-carrier-protein] synthase.